Consider the following 33-residue polypeptide: Unknown 31.6 kDa protein from 2D-PAGE (33 aa).

The sequence is that of Unknown 31.6 kDa protein from 2D-PAGE from Onion yellows phytoplasma.